Consider the following 306-residue polypeptide: Ribosomal RNA small subunit methyltransferase H (306 aa).

S-adenosyl-L-methionine-binding positions include 33 to 35, Asp51, Phe82, Asp96, and Gln103; that span reads GGY.

Belongs to the methyltransferase superfamily. RsmH family.

It localises to the cytoplasm. It catalyses the reaction cytidine(1402) in 16S rRNA + S-adenosyl-L-methionine = N(4)-methylcytidine(1402) in 16S rRNA + S-adenosyl-L-homocysteine + H(+). Functionally, specifically methylates the N4 position of cytidine in position 1402 (C1402) of 16S rRNA. In Rickettsia akari (strain Hartford), this protein is Ribosomal RNA small subunit methyltransferase H.